The primary structure comprises 301 residues: Rhodopsin (301 aa).

Topologically, residues 1-18 (LHMIHLHWYQYPPMNPMM) are extracellular. The helical transmembrane segment at 19–43 (YPLLLIFMLFTGILCLAGNFVTIWV) threads the bilayer. Topologically, residues 44-55 (FMNTKSLRTPAN) are cytoplasmic. A helical membrane pass occupies residues 56–78 (LLVVNLAMSDFLMMFTMFPPMMV). Residues 79–92 (TCYYHTWTLGPTFC) are Extracellular-facing. Residues C92 and C169 are joined by a disulfide bond. Residues 93–115 (QVYGFLGNLCGCASIWTMVFITF) form a helical membrane-spanning segment. Residues 116 to 118 (DRY) carry the 'Ionic lock' involved in activated form stabilization motif. Over 116–134 (DRYNVIVKGVAGEPLSTKK) the chain is Cytoplasmic. Residues 135–155 (ASLWILIVWVLSLAWCMAPFF) form a helical membrane-spanning segment. Over 156-182 (GWNRYVPEGNLTGCGTDYLSEDILSRS) the chain is Extracellular. The N-linked (GlcNAc...) asparagine glycan is linked to N165. A helical transmembrane segment spans residues 183-204 (YLYIYSTWVYFLPLTITIYCYV). At 205–245 (FIIKAVAAHEKGMRDQAKKMGIKSLRNEEAQKTSAECRLAK) the chain is on the cytoplasmic side. Residues 246 to 267 (IAMTTVALWFIAWTPYLLINWV) traverse the membrane as a helical segment. Residues 268–278 (GMFARSYLSPV) are Extracellular-facing. The chain crosses the membrane as a helical span at residues 279–300 (YTIWGYVFAKANAVYNPIVYAI). N6-(retinylidene)lysine is present on K288.

It belongs to the G-protein coupled receptor 1 family. Opsin subfamily. As to quaternary structure, homodimer. Interacts with GNAQ. Contains one covalently linked retinal chromophore.

The protein resides in the cell projection. Its subcellular location is the rhabdomere membrane. Functionally, photoreceptor required for image-forming vision at low light intensity. Can use both retinal and 3-dehydroretinal as visual pigment. Light-induced isomerization of 11-cis to all-trans retinal triggers a conformational change that activates signaling via G-proteins. Signaling via GNAQ probably mediates the activation of phospholipase C. The polypeptide is Rhodopsin (RHO) (Procambarus milleri (Miami cave crayfish)).